A 242-amino-acid polypeptide reads, in one-letter code: ATP synthase subunit a (242 aa).

Transmembrane regions (helical) follow at residues 29-49, 84-104, 114-134, 140-160, 189-209, and 210-230; these read SSIY…LAFY, FIPL…LGMT, IIVT…VGFV, FLTL…MIVI, VIAG…IPLM, and VILI…FTIL.

This sequence belongs to the ATPase A chain family. F-type ATPases have 2 components, CF(1) - the catalytic core - and CF(0) - the membrane proton channel. CF(1) has five subunits: alpha(3), beta(3), gamma(1), delta(1), epsilon(1). CF(0) has three main subunits: a(1), b(2) and c(9-12). The alpha and beta chains form an alternating ring which encloses part of the gamma chain. CF(1) is attached to CF(0) by a central stalk formed by the gamma and epsilon chains, while a peripheral stalk is formed by the delta and b chains.

It localises to the cell inner membrane. Functionally, key component of the proton channel; it plays a direct role in the translocation of protons across the membrane. This chain is ATP synthase subunit a, found in Rickettsia felis (strain ATCC VR-1525 / URRWXCal2) (Rickettsia azadi).